We begin with the raw amino-acid sequence, 162 residues long: 6,7-dimethyl-8-ribityllumazine synthase (162 aa).

5-amino-6-(D-ribitylamino)uracil contacts are provided by residues Tyr27, 58–60, and 87–89; these read ALE and CVI. 92-93 provides a ligand contact to (2S)-2-hydroxy-3-oxobutyl phosphate; it reads ET. The active-site Proton donor is the His95. Residue Asn120 coordinates 5-amino-6-(D-ribitylamino)uracil. Residue Arg134 participates in (2S)-2-hydroxy-3-oxobutyl phosphate binding.

The protein belongs to the DMRL synthase family.

It carries out the reaction (2S)-2-hydroxy-3-oxobutyl phosphate + 5-amino-6-(D-ribitylamino)uracil = 6,7-dimethyl-8-(1-D-ribityl)lumazine + phosphate + 2 H2O + H(+). It functions in the pathway cofactor biosynthesis; riboflavin biosynthesis; riboflavin from 2-hydroxy-3-oxobutyl phosphate and 5-amino-6-(D-ribitylamino)uracil: step 1/2. Its function is as follows. Catalyzes the formation of 6,7-dimethyl-8-ribityllumazine by condensation of 5-amino-6-(D-ribitylamino)uracil with 3,4-dihydroxy-2-butanone 4-phosphate. This is the penultimate step in the biosynthesis of riboflavin. In Azorhizobium caulinodans (strain ATCC 43989 / DSM 5975 / JCM 20966 / LMG 6465 / NBRC 14845 / NCIMB 13405 / ORS 571), this protein is 6,7-dimethyl-8-ribityllumazine synthase.